We begin with the raw amino-acid sequence, 469 residues long: 1-aminocyclopropane-1-carboxylate synthase 8 (469 aa).

Substrate-binding residues include glutamate 47 and tyrosine 85. An N6-(pyridoxal phosphate)lysine modification is found at lysine 272.

It belongs to the class-I pyridoxal-phosphate-dependent aminotransferase family. In terms of assembly, homodimer and heterodimer. In vivo, the relevance of heterodimerization with other ACS enzymes is however unsure. Interacts with GRF3. Pyridoxal 5'-phosphate is required as a cofactor. May be processed at its C-terminus. Expressed in roots. Expressed at low level in flowers and siliques.

The enzyme catalyses S-adenosyl-L-methionine = 1-aminocyclopropane-1-carboxylate + S-methyl-5'-thioadenosine + H(+). It functions in the pathway alkene biosynthesis; ethylene biosynthesis via S-adenosyl-L-methionine; ethylene from S-adenosyl-L-methionine: step 1/2. Its function is as follows. 1-aminocyclopropane-1-carboxylate synthase (ACS) enzymes catalyze the conversion of S-adenosyl-L-methionine (SAM) into 1-aminocyclopropane-1-carboxylate (ACC), a direct precursor of ethylene. In Arabidopsis thaliana (Mouse-ear cress), this protein is 1-aminocyclopropane-1-carboxylate synthase 8 (ACS8).